A 227-amino-acid chain; its full sequence is uncharacterized protein (227 aa).

The protein localises to the virion. This is an uncharacterized protein from Acanthamoeba polyphaga (Amoeba).